The sequence spans 326 residues: Tetraacyldisaccharide 4'-kinase (326 aa).

55–62 (TAGGNGKT) contacts ATP.

It belongs to the LpxK family.

It carries out the reaction a lipid A disaccharide + ATP = a lipid IVA + ADP + H(+). It functions in the pathway glycolipid biosynthesis; lipid IV(A) biosynthesis; lipid IV(A) from (3R)-3-hydroxytetradecanoyl-[acyl-carrier-protein] and UDP-N-acetyl-alpha-D-glucosamine: step 6/6. Functionally, transfers the gamma-phosphate of ATP to the 4'-position of a tetraacyldisaccharide 1-phosphate intermediate (termed DS-1-P) to form tetraacyldisaccharide 1,4'-bis-phosphate (lipid IVA). The polypeptide is Tetraacyldisaccharide 4'-kinase (Erwinia tasmaniensis (strain DSM 17950 / CFBP 7177 / CIP 109463 / NCPPB 4357 / Et1/99)).